We begin with the raw amino-acid sequence, 801 residues long: MESEQLFHRGYYRNSYNSITSASSDEELLDGAGVIMDFQTSEDDNLLDGDTAVGTHYTMTNGGSINSSTHLLDLLDEPIPGVGTYDDFHTIDWVREKCKDRERHRRINSKKKESAWEMTKSLYDAWSGWLVVTLTGLASGALAGLIDIAADWMTDLKEGICLSALWYNHEQCCWGSNETTFEERDKCPQWKTWAELIIGQAEGPGSYIMNYIMYIFWALSFAFLAVSLVKVFAPYACGSGIPEIKTILSGFIIRGYLGKWTLMIKTVTLVLAVASGLSLGKEGPLVHVACCCGNIFSYLFPKYSTNEAKKREVLSAASAAGVSVAFGAPIGGVLFSLEEVSYYFPLKTLWRSFFAALVAAFVLRSINPFGNSRLVLFYVEYHTPWYLFELFPFILLGVFGGLWGAFFIRANIAWCRRRKSTKFGKYPVLEVIIVAAITAVIAFPNPYTRLNTSELIKELFTDCGPLESSSLCDYRNDMNASKIVDDIPDRPAGIGVYSAIWQLCLALIFKIIMTVFTFGIKVPSGLFIPSMAYYHHDWFIFKEWCEVGADCITPGLYAMVGAAACLGGVTRMTVSLVVIVFELTGGLEYIVPLMAAVMTSKWVGDAFGREGIYEAHIRLNGYPFLDAKEEFTHTTLAADVMRPRRNDPPLAVLTQDNMTVDDIENMINETSYNGFPVIMSKESQRLVGFALRRDLTIAIESARKKQEGIVGSSRVCFAQHTPSLPAESPRPLKLRSILDMSPFTVTDHTPMEIVVDIFRKLGLRQCLVTHNGRLLGIITKKDILRHMAQTANQDPASIMFN.

At 1–125 the chain is on the cytoplasmic side; that stretch reads MESEQLFHRG…WEMTKSLYDA (125 aa). Short sequence motifs (di-leucine internalization motif; mediates targeting to late endosome and lysosome membranes) lie at residues 28 to 29, 46 to 47, and 71 to 75; these read LL and LLDLL. A helical membrane pass occupies residues 126–163; sequence WSGWLVVTLTGLASGALAGLIDIAADWMTDLKEGICLS. N-linked (GlcNAc...) asparagine glycosylation is present at Asn177. The chain crosses the membrane as a helical span at residues 209–232; it reads MNYIMYIFWALSFAFLAVSLVKVF. The Selectivity filter part_1 motif lies at 238-242; it reads GSGIP. Position 239 (Ser239) interacts with chloride. An intramembrane region (helical) is located at residues 241–248; that stretch reads IPEIKTIL. The next 2 helical transmembrane spans lie at 258–276 and 282–301; these read GKWT…VASG and EGPL…YLFP. The Selectivity filter part_2 signature appears at 280–284; it reads GKEGP. Intramembrane regions (helical) lie at residues 313-325 and 329-337; these read VLSA…VSVA and PIGGVLFSL. A run of 3 helical transmembrane segments spans residues 349-367, 391-416, and 423-443; these read LWRS…RSIN, FPFI…AWCR, and FGKY…VIAF. N-linked (GlcNAc...) asparagine glycans are attached at residues Asn451 and Asn479. Residues 500–520 form a helical membrane-spanning segment; that stretch reads IWQLCLALIFKIIMTVFTFGI. A Selectivity filter part_3 motif is present at residues 525–529; it reads GLFIP. Residue Phe527 participates in chloride binding. Intramembrane regions (helical) lie at residues 555-569 and 573-584; these read GLYA…LGGV and TVSLVVIVFELT. The note=Loop between two helices intramembrane region spans 585–588; the sequence is GGLE. Residues 589–607 form a helical membrane-spanning segment; it reads YIVPLMAAVMTSKWVGDAF. Residues 608 to 801 lie on the Cytoplasmic side of the membrane; it reads GREGIYEAHI…NQDPASIMFN (194 aa). Tyr613 contributes to the chloride binding site. 2 CBS domains span residues 641–705 and 738–795; these read MRPR…ARKK and LDMS…NQDP. ATP contacts are provided by residues 672 to 674 and 779 to 782; these read YNG and TKKD.

It belongs to the chloride channel (TC 2.A.49) family. ClC-3/CLCN3 subfamily. As to quaternary structure, monomer and homodimer. Forms heterodimers with CLCN4. Post-translationally, N-glycosylated.

The protein localises to the early endosome membrane. Its subcellular location is the late endosome membrane. The protein resides in the lysosome membrane. It localises to the cell membrane. In terms of biological role, strongly outwardly rectifying, electrogenic H(+)/Cl(-)exchanger which mediates the exchange of chloride ions against protons. The CLC channel family contains both chloride channels and proton-coupled anion transporters that exchange chloride or another anion for protons. The presence of conserved gating glutamate residues is typical for family members that function as antiporters. This chain is H(+)/Cl(-) exchange transporter 3 (CLCN3), found in Pongo abelii (Sumatran orangutan).